A 302-amino-acid chain; its full sequence is Nucleotide-binding protein Rsph17025_2562 (302 aa).

Position 15–22 (15–22 (GPSGAGRT)) interacts with ATP. Residue 62–65 (DVRN) coordinates GTP.

The protein belongs to the RapZ-like family.

Its function is as follows. Displays ATPase and GTPase activities. The sequence is that of Nucleotide-binding protein Rsph17025_2562 from Cereibacter sphaeroides (strain ATCC 17025 / ATH 2.4.3) (Rhodobacter sphaeroides).